The chain runs to 1865 residues: Dedicator of cytokinesis protein 1 (1865 aa).

Residues 9 to 70 (REEKYGVAFY…PASYIHLKEA (62 aa)) enclose the SH3 domain. Residues 425–609 (RNDIYVTLVQ…DSFQISTLVC (185 aa)) form the C2 DOCK-type domain. In terms of domain architecture, DOCKER spans 1207–1617 (YKEIEREEMY…VEKQYGVRTM (411 aa)). The tract at residues 1613–1723 (GVRTMPSGLD…FKPADSSLQQ (111 aa)) is disordered. Positions 1639 to 1664 (PSSSRPLSVASVSSFSSDSTPSRPGS) are enriched in low complexity. The span at 1680-1694 (RSQDKLDKDDPDKEK) shows a compositional bias: basic and acidic residues. Serine 1681 carries the phosphoserine modification. The phosphoinositide-binding stretch occupies residues 1687–1695 (KDDPDKEKK). Residues 1695–1704 (KDKKKEKRNS) are compositionally biased toward basic residues. A compositionally biased stretch (basic and acidic residues) spans 1705–1716 (KHQEIFDKEFKP). A phosphoserine mark is found at serine 1743, serine 1756, serine 1761, and serine 1764. Disordered stretches follow at residues 1753–1778 (RRFS…AKLS) and 1801–1865 (PLPL…GIVQ). Residues 1756–1766 (SVSPASPSSQQ) show a composition bias toward low complexity. Phosphothreonine is present on residues threonine 1767 and threonine 1772. Positions 1793–1819 (MDVADVPPPLPLKGNMADYGNLMENQD) are interaction with NCK2 second and third SH3 domain (minor). An SH3-binding; interaction with CRK motif is present at residues 1799-1805 (PPPLPLK). Positions 1820–1836 (MMVSPTSPPPPPPQRQQ) are interaction with NCK2 third SH3 domain (major). Positions 1825 to 1851 (TSPPPPPPQRQQPPPLPSKTPPPPPPK) are enriched in pro residues. The interval 1837-1852 (PPPLPSKTPPPPPPKT) is interaction with NCK2 (minor). Residues 1838–1843 (PPLPSK) carry the SH3-binding; interaction with CRK motif. Serine 1858 carries the phosphoserine modification.

The protein belongs to the DOCK family. As to quaternary structure, interacts with the SH3 domains of CRK and NCK2 via multiple sites. Interacts with nucleotide-free RAC1 via its DOCKER domain. Interacts with ELMO1, ELMO2 and probably ELMO3 via its SH3 domain. Interacts with RAC1. Interacts with ELMO1 and ADGRB1. Identified in a complex with AUTS2 and ELMO2.

The protein resides in the cytoplasm. Its subcellular location is the membrane. Its function is as follows. Involved in cytoskeletal rearrangements required for phagocytosis of apoptotic cells and cell motility. Along with DOCK1, mediates CRK/CRKL regulation of epithelial and endothelial cell spreading and migration on type IV collagen. Functions as a guanine nucleotide exchange factor (GEF), which activates Rac Rho small GTPases by exchanging bound GDP for free GTP. Its GEF activity may be enhanced by ELMO1. The chain is Dedicator of cytokinesis protein 1 (Dock1) from Mus musculus (Mouse).